The primary structure comprises 214 residues: Ribonuclease P protein component 3 (214 aa).

It belongs to the eukaryotic/archaeal RNase P protein component 3 family. Consists of a catalytic RNA component and at least 4-5 protein subunits.

It localises to the cytoplasm. It carries out the reaction Endonucleolytic cleavage of RNA, removing 5'-extranucleotides from tRNA precursor.. Functionally, part of ribonuclease P, a protein complex that generates mature tRNA molecules by cleaving their 5'-ends. This Thermococcus gammatolerans (strain DSM 15229 / JCM 11827 / EJ3) protein is Ribonuclease P protein component 3.